Here is a 238-residue protein sequence, read N- to C-terminus: C-type lectin domain family 4 member A (238 aa).

Over 1 to 48 (MASEITYAEVKFKNESNSLHTYSESPAAPREKPIRDLRKPGSPSLLLT) the chain is Cytoplasmic. Residues 5–10 (ITYAEV) carry the ITIM motif motif. Residues 49–69 (SLMLLLLLLAITFLVAFIIYF) form a helical; Signal-anchor for type II membrane protein membrane-spanning segment. The Extracellular portion of the chain corresponds to 70-238 (QKYSQLLEEK…SVCQMKKINL (169 aa)). N-linked (GlcNAc...) asparagine glycosylation is present at Asn-91. Residues Cys-107 and Cys-118 are joined by a disulfide bond. The region spanning 126 to 233 (SSASWNKSEE…SLKQKSVCQM (108 aa)) is the C-type lectin domain. 2 N-linked (GlcNAc...) asparagine glycosylation sites follow: Asn-131 and Asn-136. Intrachain disulfides connect Cys-137–Cys-231 and Cys-205–Cys-223. Ca(2+)-binding residues include Val-146, Glu-152, Glu-197, Ser-199, and Glu-203. Alpha-D-mannopyranose contacts are provided by residues 197-199 (EPS) and Glu-203. Position 209-211 (209-211 (IYR)) interacts with N-acetyl-D-glucosamine. Positions 219 and 220 each coordinate Ca(2+).

In terms of assembly, may interact with PTPN6 via its ITIM site. As to expression, expressed in splenic antigen-presenting cells including B-cells, monocytes/macrophages, and dendritic cells (at protein level). Expressed in spleen and lymph node and slightly increased with dendritic cell maturation.

The protein localises to the cell membrane. Its function is as follows. May be involved in regulating immune reactivity. May play a role in modulating dendritic cells (DC) differentiation and/or maturation. May be involved in the inhibition of B-cell-receptor-mediated calcium mobilization and protein tyrosine phosphorylation. In terms of biological role, C-type lectin receptor that binds carbohydrates mannose and fucose but also weakly interacts with N-acetylglucosamine (GlcNAc) in a Ca(2+)-dependent manner. Involved in regulating immune reactivity. Once triggered by antigen, it is internalized by clathrin-dependent endocytosis and delivers its antigenic cargo into the antigen presentation pathway resulting in cross-priming of CD8(+) T cells. This cross-presentation and cross-priming are enhanced by TLR7 and TLR8 agonists with increased expansion of the CD8(+) T cells, high production of IFNG and TNF with reduced levels of IL4, IL5 and IL13. In plasmacytoid dendritic cells, inhibits TLR9-mediated IFNA and TNF production. May be involved via its ITIM motif (immunoreceptor tyrosine-based inhibitory motifs) in the inhibition of B-cell-receptor-mediated calcium mobilization and protein tyrosine phosphorylation. The chain is C-type lectin domain family 4 member A (Clec4a) from Mus musculus (Mouse).